A 77-amino-acid chain; its full sequence is Serine protease inhibitor 2 (77 aa).

The first 17 residues, 1 to 17 (MMFTPLIVLTLLVLATA), serve as a signal peptide directing secretion. 5 cysteine pairs are disulfide-bonded: Cys-21–Cys-53, Cys-30–Cys-48, Cys-33–Cys-44, Cys-37–Cys-74, and Cys-55–Cys-68. A TIL domain is found at 21-74 (CGPNEQWSDCPKCELQCGESDKPCATICGEPKCYCSPDKYRRIPDGRCIRKIQC).

The protein resides in the secreted. Defends the organism against the host's proteinases. The chain is Serine protease inhibitor 2 from Anisakis simplex (Herring worm).